Reading from the N-terminus, the 572-residue chain is Acetyl-coenzyme A synthetase (572 aa).

A CoA-binding site is contributed by Thr260. ATP-binding positions include 333-335 (GEP), 354-359 (DTWWMT), Asp440, and Arg455. A CoA-binding site is contributed by Ser463. ATP is bound at residue Arg466. Mg(2+)-binding residues include Val477, His479, and Ile482. A CoA-binding site is contributed by Lys524. N6-acetyllysine is present on Lys549.

It belongs to the ATP-dependent AMP-binding enzyme family. Interacts with FloT. Mg(2+) serves as cofactor. In terms of processing, acetylated. Deacetylation by the SIR2-homolog deacetylase activates the enzyme.

The protein resides in the cell membrane. It localises to the membrane raft. It catalyses the reaction acetate + ATP + CoA = acetyl-CoA + AMP + diphosphate. Functionally, catalyzes the conversion of acetate into acetyl-CoA (AcCoA), an essential intermediate at the junction of anabolic and catabolic pathways. AcsA undergoes a two-step reaction. In the first half reaction, AcsA combines acetate with ATP to form acetyl-adenylate (AcAMP) intermediate. In the second half reaction, it can then transfer the acetyl group from AcAMP to the sulfhydryl group of CoA, forming the product AcCoA. Has a role in growth and sporulation on acetate. This chain is Acetyl-coenzyme A synthetase (acsA), found in Bacillus subtilis (strain 168).